A 359-amino-acid chain; its full sequence is Putative plant UBX domain-containing protein 15 (359 aa).

In terms of domain architecture, UBX spans 277 to 357 (DRSVVCSISV…GIANSIISVT (81 aa)).

This is Putative plant UBX domain-containing protein 15 from Arabidopsis thaliana (Mouse-ear cress).